We begin with the raw amino-acid sequence, 117 residues long: Large ribosomal subunit protein bL20 (117 aa).

This sequence belongs to the bacterial ribosomal protein bL20 family.

Functionally, binds directly to 23S ribosomal RNA and is necessary for the in vitro assembly process of the 50S ribosomal subunit. It is not involved in the protein synthesizing functions of that subunit. The chain is Large ribosomal subunit protein bL20 from Geobacter metallireducens (strain ATCC 53774 / DSM 7210 / GS-15).